The primary structure comprises 329 residues: Cytoplasmic phosphatidylinositol transfer protein 1 (329 aa).

Positions 267–329 are disordered; sequence SHGGYSSAPS…GNKPSLAKPE (63 aa).

The protein belongs to the PtdIns transfer protein family. PI transfer class IIB subfamily.

Its subcellular location is the cytoplasm. The enzyme catalyses a 1,2-diacyl-sn-glycero-3-phospho-(1D-myo-inositol)(in) = a 1,2-diacyl-sn-glycero-3-phospho-(1D-myo-inositol)(out). It carries out the reaction a 1,2-diacyl-sn-glycero-3-phosphate(in) = a 1,2-diacyl-sn-glycero-3-phosphate(out). Functionally, catalyzes the transfer of phosphatidylinositol (PI) and phosphatidic acid (PA) between membranes. Binds PA derived from the phospholipase D signaling pathway and among the cellular PA species, preferably binds to the C16:0/16:1 and C16:1/18:1 PA species. This is Cytoplasmic phosphatidylinositol transfer protein 1 (pitpnc1) from Xenopus tropicalis (Western clawed frog).